We begin with the raw amino-acid sequence, 245 residues long: tRNA pseudouridine synthase A 2 (245 aa).

The active-site Nucleophile is the aspartate 53. Tyrosine 111 contacts substrate.

Belongs to the tRNA pseudouridine synthase TruA family. Homodimer.

The enzyme catalyses uridine(38/39/40) in tRNA = pseudouridine(38/39/40) in tRNA. Formation of pseudouridine at positions 38, 39 and 40 in the anticodon stem and loop of transfer RNAs. The polypeptide is tRNA pseudouridine synthase A 2 (Bacillus thuringiensis subsp. konkukian (strain 97-27)).